A 341-amino-acid chain; its full sequence is S-adenosylmethionine:tRNA ribosyltransferase-isomerase (341 aa).

The protein belongs to the QueA family. Monomer.

It localises to the cytoplasm. The enzyme catalyses 7-aminomethyl-7-carbaguanosine(34) in tRNA + S-adenosyl-L-methionine = epoxyqueuosine(34) in tRNA + adenine + L-methionine + 2 H(+). Its pathway is tRNA modification; tRNA-queuosine biosynthesis. Transfers and isomerizes the ribose moiety from AdoMet to the 7-aminomethyl group of 7-deazaguanine (preQ1-tRNA) to give epoxyqueuosine (oQ-tRNA). In Clostridium botulinum (strain Okra / Type B1), this protein is S-adenosylmethionine:tRNA ribosyltransferase-isomerase.